We begin with the raw amino-acid sequence, 1816 residues long: Nuclear pore complex protein Nup98-Nup96 (1816 aa).

The FG repeats 1 stretch occupies residues Met-1–Ala-156. The tract at residues Pro-157–Lys-213 is GLEBS; interaction with RAE1. The segment at Gly-214–Gly-480 is FG repeats 2. A disordered region spans residues Pro-512 to Pro-535. Ser-524 carries the phosphoserine modification. Basic and acidic residues predominate over residues Asp-525 to Lys-534. Lys-563 is covalently cross-linked (Glycyl lysine isopeptide (Lys-Gly) (interchain with G-Cter in SUMO2)). Position 603 is an N6-acetyllysine; alternate (Lys-603). Lys-603 is covalently cross-linked (Glycyl lysine isopeptide (Lys-Gly) (interchain with G-Cter in SUMO2); alternate). Phosphoserine is present on residues Ser-608, Ser-612, Ser-618, Ser-623, Ser-625, and Ser-653. The tract at residues Ile-663 to Ser-682 is disordered. Residue Lys-665 forms a Glycyl lysine isopeptide (Lys-Gly) (interchain with G-Cter in SUMO2) linkage. Thr-670 carries the phosphothreonine modification. Residues Thr-670 to Ser-682 show a composition bias toward polar residues. 4 positions are modified to phosphoserine: Ser-673, Ser-680, Ser-681, and Ser-839. The 143-residue stretch at Lys-738–Phe-880 folds into the Peptidase S59 domain. The active-site Nucleophile is Ser-881. The interval Gln-886 to Val-937 is disordered. 6 positions are modified to phosphoserine: Ser-888, Ser-934, Ser-1027, Ser-1042, Ser-1059, and Ser-1063. At Thr-1069 the chain carries Phosphothreonine. A Phosphoserine modification is found at Ser-1328. At Thr-1771 the chain carries Phosphothreonine.

This sequence belongs to the nucleoporin GLFG family. In terms of assembly, part of the nuclear pore complex (NPC). Interacts directly with NUP96. Part of the Nup160 subcomplex in the nuclear pore which is composed of NUP160, NUP133, NUP107 and NUP96; this complex plays a role in RNA export and in tethering NUP98 and NUP153 to the nucleus. Interacts with RAE1. Does not interact with TPR. Interacts directly with NUP88 and NUP214, subunits of the cytoplasmic filaments of the NPC. Interacts (via N-terminus) with DHX9 (via DRBM, OB-fold and RGG domains); this interaction occurs in a RNA-dependent manner and stimulates DHX9-mediated ATPase activity. In terms of processing, the N-terminus is blocked. Post-translationally, isoform 1 is autoproteolytically cleaved to yield Nup98 and Nup96 or Nup98 only, respectively. Cleaved Nup98 is necessary for the targeting of Nup98 to the nuclear pore and the interaction with Nup96.

The protein localises to the nucleus membrane. The protein resides in the nucleus. Its subcellular location is the nuclear pore complex. It is found in the nucleoplasm. Plays a role in the nuclear pore complex (NPC) assembly and/or maintenance. Involved in the bidirectional transport across the NPC. May anchor NUP153 and TPR to the NPC. In terms of biological role, plays a role in the nuclear pore complex (NPC) assembly and/or maintenance. NUP98 and NUP96 are involved in the bidirectional transport across the NPC. May anchor NUP153 and TPR to the NPC. In cooperation with DHX9, plays a role in transcription and alternative splicing activation of a subset of genes. Involved in the localization of DHX9 in discrete intranuclear foci (GLFG-body). The protein is Nuclear pore complex protein Nup98-Nup96 (Nup98) of Rattus norvegicus (Rat).